Here is a 367-residue protein sequence, read N- to C-terminus: Probable neutral protease 2 homolog MCYG_00239 (367 aa).

The N-terminal stretch at Met1–Gly19 is a signal peptide. The propeptide occupies Phe20–Arg190. 3 disulfides stabilise this stretch: Cys198–Cys268, Cys275–Cys293, and Cys307–Cys367. Residue His318 participates in Zn(2+) binding. Glu319 is a catalytic residue. His322 and Asp333 together coordinate Zn(2+).

The protein belongs to the peptidase M35 family. It depends on Zn(2+) as a cofactor.

The protein localises to the secreted. The catalysed reaction is Preferential cleavage of bonds with hydrophobic residues in P1'. Also 3-Asn-|-Gln-4 and 8-Gly-|-Ser-9 bonds in insulin B chain.. Functionally, probable secreted metalloprotease that shows high activities on basic nuclear substrates such as histone and protamine. May be involved in virulence. This chain is Probable neutral protease 2 homolog MCYG_00239, found in Arthroderma otae (strain ATCC MYA-4605 / CBS 113480) (Microsporum canis).